The sequence spans 562 residues: 63 kDa globulin-like protein (562 aa).

The signal sequence occupies residues 1 to 23; sequence MATRARATILLLLAAVLFAAAAA. Basic and acidic residues predominate over residues 63-88; sequence QQQQERRREHGGHDDDRRDRDRRGEG. Residues 63–103 are disordered; it reads QQQQERRREHGGHDDDRRDRDRRGEGSSEEEDEGRERGSRR. Cupin type-1 domains are found at residues 106-264 and 312-507; these read YVFG…EKLE and FNIL…REVD. The N-linked (GlcNAc...) asparagine glycan is linked to Asn350. Disordered regions lie at residues 383 to 430 and 516 to 550; these read PHLS…QVGQ and SAFL…GDEA. Basic and acidic residues predominate over residues 390 to 408; that stretch reads RGGESEERRRERGKGKWRE. Residues 409–427 are compositionally biased toward acidic residues; sequence EEEEEEEQQKGQEEEEEEQ.

It belongs to the 7S seed storage protein family.

It localises to the secreted. Its function is as follows. Seed storage protein. The sequence is that of 63 kDa globulin-like protein from Oryza sativa subsp. japonica (Rice).